A 188-amino-acid chain; its full sequence is Surfactant protein C (188 aa).

Positions 1–23 (MDMGSKEALMESPPDYSAAPRGR) are excised as a propeptide. S-palmitoyl cysteine attachment occurs at residues cysteine 28 and cysteine 29. The propeptide occupies 59-188 (HMSQKHTEMV…LCGEVPLIYI (130 aa)). In terms of domain architecture, BRICHOS spans 94-188 (FPIGSTGIVT…LCGEVPLIYI (95 aa)). A disulfide bond links cysteine 121 and cysteine 180. Positions 144 to 164 (NPAEPPTQRGQDKGPAAGPAS) are disordered.

The protein localises to the secreted. Its subcellular location is the extracellular space. It localises to the surface film. In terms of biological role, pulmonary surfactant associated proteins promote alveolar stability by lowering the surface tension at the air-liquid interface in the peripheral air spaces. The protein is Surfactant protein C (SFTPC) of Oryctolagus cuniculus (Rabbit).